We begin with the raw amino-acid sequence, 276 residues long: Foldase protein PrsA (276 aa).

The N-terminal stretch at 1–18 (MRKWMIVAAVAAVFGLSA) is a signal peptide. The N-palmitoyl cysteine moiety is linked to residue C19. A lipid anchor (S-diacylglycerol cysteine) is attached at C19. Positions 133–223 (KPKIRASHIL…YGYHIIKVTD (91 aa)) constitute a PpiC domain.

Belongs to the PrsA family.

Its subcellular location is the cell membrane. It catalyses the reaction [protein]-peptidylproline (omega=180) = [protein]-peptidylproline (omega=0). Plays a major role in protein secretion by helping the post-translocational extracellular folding of several secreted proteins. This Geobacillus sp. (strain WCH70) protein is Foldase protein PrsA.